A 284-amino-acid polypeptide reads, in one-letter code: L-ribulose-5-phosphate 3-epimerase UlaE (284 aa).

It belongs to the L-ribulose-5-phosphate 3-epimerase family.

The enzyme catalyses L-ribulose 5-phosphate = L-xylulose 5-phosphate. It functions in the pathway cofactor degradation; L-ascorbate degradation; D-xylulose 5-phosphate from L-ascorbate: step 3/4. Its function is as follows. Catalyzes the isomerization of L-xylulose-5-phosphate to L-ribulose-5-phosphate. Is involved in the anaerobic L-ascorbate utilization. The polypeptide is L-ribulose-5-phosphate 3-epimerase UlaE (Shigella boydii serotype 18 (strain CDC 3083-94 / BS512)).